The following is a 312-amino-acid chain: L-lactate dehydrogenase (312 aa).

NAD(+) is bound by residues valine 14, aspartate 35, and tyrosine 66. Residues glutamine 83, arginine 90, and 122–125 contribute to the substrate site; that span reads NPVD. Residues 120 to 122 and serine 145 contribute to the NAD(+) site; that span reads ASN. 150–153 provides a ligand contact to substrate; that stretch reads DSAR. Histidine 177 serves as the catalytic Proton acceptor. Tyrosine 220 is modified (phosphotyrosine). Residue threonine 229 participates in substrate binding.

Belongs to the LDH/MDH superfamily. LDH family. As to quaternary structure, homotetramer.

The protein localises to the cytoplasm. The catalysed reaction is (S)-lactate + NAD(+) = pyruvate + NADH + H(+). It functions in the pathway fermentation; pyruvate fermentation to lactate; (S)-lactate from pyruvate: step 1/1. Catalyzes the conversion of lactate to pyruvate. This Mycoplasma pneumoniae (strain ATCC 29342 / M129 / Subtype 1) (Mycoplasmoides pneumoniae) protein is L-lactate dehydrogenase.